The sequence spans 506 residues: Cobyric acid synthase (506 aa).

The 198-residue stretch at 251 to 448 folds into the GATase cobBQ-type domain; the sequence is DITIAIVQLP…LHGLFDSDAF (198 aa). The active-site Nucleophile is the cysteine 332. Histidine 440 is a catalytic residue.

The protein belongs to the CobB/CobQ family. CobQ subfamily.

The protein operates within cofactor biosynthesis; adenosylcobalamin biosynthesis. In terms of biological role, catalyzes amidations at positions B, D, E, and G on adenosylcobyrinic A,C-diamide. NH(2) groups are provided by glutamine, and one molecule of ATP is hydrogenolyzed for each amidation. The polypeptide is Cobyric acid synthase (Salmonella arizonae (strain ATCC BAA-731 / CDC346-86 / RSK2980)).